Here is a 350-residue protein sequence, read N- to C-terminus: 3-isopropylmalate dehydrogenase (350 aa).

Position 76–87 (76–87 (GPKWDNAPKRPE)) interacts with NAD(+). Substrate-binding residues include Arg-94, Arg-104, Arg-132, and Asp-217. Mg(2+) contacts are provided by Asp-217, Asp-241, and Asp-245. Residue 275-287 (GSAPDIANQNIAN) coordinates NAD(+).

The protein belongs to the isocitrate and isopropylmalate dehydrogenases family. LeuB type 1 subfamily. In terms of assembly, homodimer. Mg(2+) serves as cofactor. Requires Mn(2+) as cofactor.

Its subcellular location is the cytoplasm. It carries out the reaction (2R,3S)-3-isopropylmalate + NAD(+) = 4-methyl-2-oxopentanoate + CO2 + NADH. It participates in amino-acid biosynthesis; L-leucine biosynthesis; L-leucine from 3-methyl-2-oxobutanoate: step 3/4. In terms of biological role, catalyzes the oxidation of 3-carboxy-2-hydroxy-4-methylpentanoate (3-isopropylmalate) to 3-carboxy-4-methyl-2-oxopentanoate. The product decarboxylates to 4-methyl-2 oxopentanoate. The protein is 3-isopropylmalate dehydrogenase of Listeria monocytogenes serotype 4b (strain F2365).